The following is a 356-amino-acid chain: NADH-quinone oxidoreductase subunit H (356 aa).

The next 9 helical transmembrane spans lie at 17–37 (TGGI…LLLA), 51–71 (PNVV…KFVL), 83–103 (VVFI…WAVV), 116–136 (VGIL…IMGG), 162–182 (IGLI…STIV), 202–222 (LVLL…ALAE), 261–281 (IVLM…PGFP), 295–315 (LFLA…FAMA), and 334–354 (VFLP…VFGP).

The protein belongs to the complex I subunit 1 family. As to quaternary structure, NDH-1 is composed of 14 different subunits. Subunits NuoA, H, J, K, L, M, N constitute the membrane sector of the complex.

The protein localises to the cell inner membrane. The catalysed reaction is a quinone + NADH + 5 H(+)(in) = a quinol + NAD(+) + 4 H(+)(out). NDH-1 shuttles electrons from NADH, via FMN and iron-sulfur (Fe-S) centers, to quinones in the respiratory chain. The immediate electron acceptor for the enzyme in this species is believed to be ubiquinone. Couples the redox reaction to proton translocation (for every two electrons transferred, four hydrogen ions are translocated across the cytoplasmic membrane), and thus conserves the redox energy in a proton gradient. This subunit may bind ubiquinone. The sequence is that of NADH-quinone oxidoreductase subunit H from Caulobacter vibrioides (strain ATCC 19089 / CIP 103742 / CB 15) (Caulobacter crescentus).